A 434-amino-acid polypeptide reads, in one-letter code: Na(+)/H(+) antiporter NhaA 1 (434 aa).

The next 11 membrane-spanning stretches (helical) occupy residues 34–54 (GLLL…PWSA), 73–93 (LTLG…VAGL), 111–131 (ALPV…YVLW), 141–161 (GWAI…AVIS), 171–191 (FLLT…ALFY), 194–214 (ELHL…ALLV), 233–253 (VLVH…GFAV), 278–298 (SAGL…VGGF), 313–333 (VVTG…WLLA), 346–366 (WVDV…SLLI), and 380–400 (HVKV…TGVL).

The protein belongs to the NhaA Na(+)/H(+) (TC 2.A.33) antiporter family.

It localises to the cell membrane. The enzyme catalyses Na(+)(in) + 2 H(+)(out) = Na(+)(out) + 2 H(+)(in). Functionally, na(+)/H(+) antiporter that extrudes sodium in exchange for external protons. This is Na(+)/H(+) antiporter NhaA 1 from Nocardioides sp. (strain ATCC BAA-499 / JS614).